Here is a 325-residue protein sequence, read N- to C-terminus: N-acetyl-gamma-glutamyl-phosphate reductase (325 aa).

C135 is an active-site residue.

This sequence belongs to the NAGSA dehydrogenase family. Type 1 subfamily.

The protein localises to the cytoplasm. It carries out the reaction N-acetyl-L-glutamate 5-semialdehyde + phosphate + NADP(+) = N-acetyl-L-glutamyl 5-phosphate + NADPH + H(+). Its pathway is amino-acid biosynthesis; L-arginine biosynthesis; N(2)-acetyl-L-ornithine from L-glutamate: step 3/4. In terms of biological role, catalyzes the NADPH-dependent reduction of N-acetyl-5-glutamyl phosphate to yield N-acetyl-L-glutamate 5-semialdehyde. The sequence is that of N-acetyl-gamma-glutamyl-phosphate reductase from Karelsulcia muelleri (strain GWSS) (Sulcia muelleri).